The chain runs to 434 residues: ATP-dependent protease ATPase subunit HslU (434 aa).

ATP contacts are provided by residues I18, 60–65 (GVGKTE), D247, E312, and R384.

Belongs to the ClpX chaperone family. HslU subfamily. As to quaternary structure, a double ring-shaped homohexamer of HslV is capped on each side by a ring-shaped HslU homohexamer. The assembly of the HslU/HslV complex is dependent on binding of ATP.

The protein localises to the cytoplasm. ATPase subunit of a proteasome-like degradation complex; this subunit has chaperone activity. The binding of ATP and its subsequent hydrolysis by HslU are essential for unfolding of protein substrates subsequently hydrolyzed by HslV. HslU recognizes the N-terminal part of its protein substrates and unfolds these before they are guided to HslV for hydrolysis. The chain is ATP-dependent protease ATPase subunit HslU from Brucella suis (strain ATCC 23445 / NCTC 10510).